The following is a 327-amino-acid chain: Phenylalanine--tRNA ligase alpha subunit (327 aa).

Glu252 contacts Mg(2+).

It belongs to the class-II aminoacyl-tRNA synthetase family. Phe-tRNA synthetase alpha subunit type 1 subfamily. As to quaternary structure, tetramer of two alpha and two beta subunits. Mg(2+) serves as cofactor.

It localises to the cytoplasm. It carries out the reaction tRNA(Phe) + L-phenylalanine + ATP = L-phenylalanyl-tRNA(Phe) + AMP + diphosphate + H(+). This chain is Phenylalanine--tRNA ligase alpha subunit, found in Aeromonas salmonicida (strain A449).